Here is a 622-residue protein sequence, read N- to C-terminus: Low affinity potassium transport system protein Kup (622 aa).

12 helical membrane-spanning segments follow: residues 9-29, 49-69, 103-123, 137-157, 165-185, 213-233, 247-267, 276-296, 337-357, 363-383, 396-416, and 419-439; these read LPAI…TSPL, VFGF…IKYL, VIMG…TPAI, PQLD…LFMI, VGKL…VLGL, VSFI…ALYA, WFTV…ALLL, PFFL…AALA, IYIP…IVSF, LAAA…ILST, FVAL…SANL, and LLSG…IMTT.

Belongs to the HAK/KUP transporter (TC 2.A.72) family.

The protein resides in the cell inner membrane. The enzyme catalyses K(+)(in) + H(+)(in) = K(+)(out) + H(+)(out). Functionally, responsible for the low-affinity transport of potassium into the cell. Likely operates as a K(+):H(+) symporter. This is Low affinity potassium transport system protein Kup from Salmonella typhi.